A 235-amino-acid polypeptide reads, in one-letter code: Uridylate kinase (235 aa).

8-11 (KFSG) contributes to the ATP binding site. Residues 16 to 21 (GKEGYG) form an involved in allosteric activation by GTP region. Gly-50 serves as a coordination point for UMP. Gly-51 and Arg-55 together coordinate ATP. Residues Asp-71 and 132-139 (TGNPYFTT) contribute to the UMP site. Residues Thr-159, Tyr-165, and Asp-168 each contribute to the ATP site.

This sequence belongs to the UMP kinase family. In terms of assembly, homohexamer.

The protein resides in the cytoplasm. It catalyses the reaction UMP + ATP = UDP + ADP. Its pathway is pyrimidine metabolism; CTP biosynthesis via de novo pathway; UDP from UMP (UMPK route): step 1/1. Allosterically activated by GTP. Inhibited by UTP. In terms of biological role, catalyzes the reversible phosphorylation of UMP to UDP. In Sulfurovum sp. (strain NBC37-1), this protein is Uridylate kinase.